A 194-amino-acid chain; its full sequence is Dephospho-CoA kinase (194 aa).

One can recognise a DPCK domain in the interval 3-194 (IVGLTGSIGM…RAIVDDLRAG (192 aa)). Position 11 to 16 (11 to 16 (GMGKST)) interacts with ATP.

Belongs to the CoaE family.

The protein localises to the cytoplasm. It catalyses the reaction 3'-dephospho-CoA + ATP = ADP + CoA + H(+). It participates in cofactor biosynthesis; coenzyme A biosynthesis; CoA from (R)-pantothenate: step 5/5. Its function is as follows. Catalyzes the phosphorylation of the 3'-hydroxyl group of dephosphocoenzyme A to form coenzyme A. This chain is Dephospho-CoA kinase, found in Rhizobium meliloti (strain 1021) (Ensifer meliloti).